The chain runs to 277 residues: Diaminopimelate epimerase (277 aa).

Residues N13, Q46, and N65 each coordinate substrate. C74 acts as the Proton donor in catalysis. Substrate-binding positions include 75–76 (GN), N158, N191, and 209–210 (ER). The active-site Proton acceptor is the C218. 219–220 (GT) is a substrate binding site.

The protein belongs to the diaminopimelate epimerase family. In terms of assembly, homodimer.

The protein resides in the cytoplasm. The enzyme catalyses (2S,6S)-2,6-diaminopimelate = meso-2,6-diaminopimelate. The protein operates within amino-acid biosynthesis; L-lysine biosynthesis via DAP pathway; DL-2,6-diaminopimelate from LL-2,6-diaminopimelate: step 1/1. In terms of biological role, catalyzes the stereoinversion of LL-2,6-diaminopimelate (L,L-DAP) to meso-diaminopimelate (meso-DAP), a precursor of L-lysine and an essential component of the bacterial peptidoglycan. This is Diaminopimelate epimerase from Nitrosospira multiformis (strain ATCC 25196 / NCIMB 11849 / C 71).